A 238-amino-acid polypeptide reads, in one-letter code: Ribonuclease PH (238 aa).

Residues Arg86 and 124–126 contribute to the phosphate site; that span reads GTR.

The protein belongs to the RNase PH family. Homohexameric ring arranged as a trimer of dimers.

It catalyses the reaction tRNA(n+1) + phosphate = tRNA(n) + a ribonucleoside 5'-diphosphate. Functionally, phosphorolytic 3'-5' exoribonuclease that plays an important role in tRNA 3'-end maturation. Removes nucleotide residues following the 3'-CCA terminus of tRNAs; can also add nucleotides to the ends of RNA molecules by using nucleoside diphosphates as substrates, but this may not be physiologically important. Probably plays a role in initiation of 16S rRNA degradation (leading to ribosome degradation) during starvation. The sequence is that of Ribonuclease PH from Alkalilimnicola ehrlichii (strain ATCC BAA-1101 / DSM 17681 / MLHE-1).